The chain runs to 133 residues: Small ribosomal subunit protein uS11 (133 aa).

It belongs to the universal ribosomal protein uS11 family. As to quaternary structure, part of the 30S ribosomal subunit. Interacts with proteins S7 and S18. Binds to IF-3.

Its function is as follows. Located on the platform of the 30S subunit, it bridges several disparate RNA helices of the 16S rRNA. Forms part of the Shine-Dalgarno cleft in the 70S ribosome. The chain is Small ribosomal subunit protein uS11 from Burkholderia pseudomallei (strain 1106a).